The chain runs to 389 residues: Spore coat polysaccharide biosynthesis protein SpsC (389 aa).

N6-(pyridoxal phosphate)lysine is present on Lys-187.

Belongs to the DegT/DnrJ/EryC1 family. It depends on pyridoxal 5'-phosphate as a cofactor.

Its pathway is spore coat biogenesis; spore coat polysaccharide biosynthesis. The chain is Spore coat polysaccharide biosynthesis protein SpsC (spsC) from Bacillus subtilis (strain 168).